We begin with the raw amino-acid sequence, 387 residues long: NifS-like protein (387 aa).

Pyridoxal 5'-phosphate is bound by residues 58–59 (SE) and 184–186 (SIN).

Belongs to the class-V pyridoxal-phosphate-dependent aminotransferase family. NifS/IscS subfamily. Pyridoxal 5'-phosphate is required as a cofactor.

Its subcellular location is the virion. The protein is NifS-like protein of African swine fever virus (isolate Tick/South Africa/Pretoriuskop Pr4/1996) (ASFV).